A 229-amino-acid polypeptide reads, in one-letter code: MCPGIREWPEDERPREKMLRKGAASLSDAELLALIIRTGDTATGKSAIDLGRELISLFGSSLRELGSADMAEITAIKGMGMAKAAGVKAAFTLASRFQGRRLENLDRFTSPRQVFDYFHYELRDCRREYFLVLLLDGKNRIIRRVQVSEGSLNQSIVHPREVFCQAVKESAAAVILVHNHPTGDPTPSQEDIAITRRLKEAGEIMGIRVLDHIIIGDGEYLSFVERGVL.

The disordered stretch occupies residues 1–20 (MCPGIREWPEDERPREKMLR). Basic and acidic residues predominate over residues 7–19 (EWPEDERPREKML). Residues 107–229 (RFTSPRQVFD…YLSFVERGVL (123 aa)) form the MPN domain. Positions 178, 180, and 191 each coordinate Zn(2+). Residues 178–191 (HNHPTGDPTPSQED) carry the JAMM motif motif.

It belongs to the UPF0758 family.

The sequence is that of UPF0758 protein Ppro_3582 from Pelobacter propionicus (strain DSM 2379 / NBRC 103807 / OttBd1).